The following is a 92-amino-acid chain: Ferredoxin-like protein in nif region (92 aa).

4Fe-4S ferredoxin-type domains are found at residues 2–28 (ALKI…SLAG) and 29–65 (PHFE…LADG). 8 residues coordinate [4Fe-4S] cluster: Cys-9, Cys-12, Cys-15, Cys-19, Cys-38, Cys-41, Cys-50, and Cys-54.

[4Fe-4S] cluster is required as a cofactor.

Functionally, ferredoxins are iron-sulfur proteins that transfer electrons in a wide variety of metabolic reactions. The sequence is that of Ferredoxin-like protein in nif region from Azotobacter vinelandii.